Reading from the N-terminus, the 383-residue chain is Polyketide synthase 4 (383 aa).

Catalysis depends on Cys164, which acts as the Nucleophile and monoketide coumarate intermediate.

This sequence belongs to the thiolase-like superfamily. Chalcone/stilbene synthases family. Homodimer. In terms of tissue distribution, expressed in fruits.

The catalysed reaction is 4-coumaroyl-CoA + malonyl-CoA + H2O + H(+) = 4-hydroxybenzalacetone + 2 CO2 + 2 CoA. The enzyme catalyses (E)-4-coumaroyl-CoA + 3 malonyl-CoA + 3 H(+) = 2',4,4',6'-tetrahydroxychalcone + 3 CO2 + 4 CoA. It participates in secondary metabolite biosynthesis; flavonoid biosynthesis. Its activity is regulated as follows. Inhibited by glutathione. In terms of biological role, bifunctional polyketide synthase producing both 4-hydroxybenzalacetone and naringenin chalcone. Can use p-coumaryl-CoA and ferulyl-CoA as substrates. Catalyzes the initial key reaction step in the biosynthesis of phenylbutanoids. The sequence is that of Polyketide synthase 4 (PKS4) from Rubus idaeus (Raspberry).